The chain runs to 489 residues: 5-hydroxytryptamine receptor 3A (489 aa).

Positions 1–23 are cleaved as a signal peptide; it reads MRLCIPQVLLALFLSMLTAPGEG. Residues 24–246 lie on the Extracellular side of the membrane; that stretch reads SRRRATQARD…MKFYVIIRRR (223 aa). 3 N-linked (GlcNAc...) asparagine glycosylation sites follow: Asn-109, Asn-175, and Asn-191. A disulfide bridge connects residues Cys-162 and Cys-176. The chain crosses the membrane as a helical span at residues 247 to 273; the sequence is PLFYAVSLLLPSIFLMVVDIVGFCLPP. Topologically, residues 274-278 are cytoplasmic; that stretch reads DSGER. Residues 279–297 form a helical membrane-spanning segment; it reads VSFKITLLLGYSVFLIIVS. Topologically, residues 298–307 are extracellular; it reads DTLPATAIGT. A helical membrane pass occupies residues 308–326; that stretch reads PLIGVYFVVCMALLVISLA. Residues 327-466 lie on the Cytoplasmic side of the membrane; sequence ETIFIVRLVH…GYVLDRLLFR (140 aa). Residues 425–461 are HA-stretch; determines single-channel conductance in 5-HT3 receptors; sequence AVRGLLQELSSIRHFLEKRDEMREVARDWLRVGYVLD. A helical membrane pass occupies residues 467–486; sequence IYLLAVLAYSITLVTLWSIW. At 487–489 the chain is on the extracellular side; that stretch reads HYS.

It belongs to the ligand-gated ion channel (TC 1.A.9) family. 5-hydroxytryptamine receptor (TC 1.A.9.2) subfamily. HTR3A sub-subfamily. In terms of assembly, forms homopentameric as well as heteropentameric serotonin-activated cation-selective channel complexes with HTR3B or HTR3C or HTR3D or HTR3E. The homomeric complex is functional but exhibits low conductance with modified voltage dependence, and decreased agonist and antagonist affinity. Heteropentameric complexes display properties which resemble that of neuronal serotonin-activated channels in vivo. Interacts with RIC3. Brain, spinal cord, and heart.

It localises to the postsynaptic cell membrane. Its subcellular location is the cell membrane. It catalyses the reaction Na(+)(in) = Na(+)(out). The catalysed reaction is K(+)(in) = K(+)(out). It carries out the reaction Ca(2+)(in) = Ca(2+)(out). The enzyme catalyses Mg(2+)(in) = Mg(2+)(out). Its function is as follows. Forms serotonin (5-hydroxytryptamine/5-HT3)-activated cation-selective channel complexes, which when activated cause fast, depolarizing responses in neurons. The protein is 5-hydroxytryptamine receptor 3A of Mus musculus (Mouse).